A 1368-amino-acid chain; its full sequence is DNA-directed RNA polymerase subunit beta (1368 aa).

It belongs to the RNA polymerase beta chain family. The RNAP catalytic core consists of 2 alpha, 1 beta, 1 beta' and 1 omega subunit. When a sigma factor is associated with the core the holoenzyme is formed, which can initiate transcription.

It catalyses the reaction RNA(n) + a ribonucleoside 5'-triphosphate = RNA(n+1) + diphosphate. In terms of biological role, DNA-dependent RNA polymerase catalyzes the transcription of DNA into RNA using the four ribonucleoside triphosphates as substrates. In Burkholderia ambifaria (strain ATCC BAA-244 / DSM 16087 / CCUG 44356 / LMG 19182 / AMMD) (Burkholderia cepacia (strain AMMD)), this protein is DNA-directed RNA polymerase subunit beta.